Reading from the N-terminus, the 628-residue chain is DNA mismatch repair protein MutL (628 aa).

A disordered region spans residues 332-416 (PTSAMPAPGN…ASTAPPLSEE (85 aa)). Polar residues predominate over residues 375-396 (EGSSRSDVPYPSASQVTETTDS).

This sequence belongs to the DNA mismatch repair MutL/HexB family.

This protein is involved in the repair of mismatches in DNA. It is required for dam-dependent methyl-directed DNA mismatch repair. May act as a 'molecular matchmaker', a protein that promotes the formation of a stable complex between two or more DNA-binding proteins in an ATP-dependent manner without itself being part of a final effector complex. This Syntrophotalea carbinolica (strain DSM 2380 / NBRC 103641 / GraBd1) (Pelobacter carbinolicus) protein is DNA mismatch repair protein MutL.